Reading from the N-terminus, the 347-residue chain is MGIALMFLLALYQMQSAIHSEIIDTPNYAGNSLQDADSEVSPSQDNDLVDALLGNDQTERAELEFRHPISVIGIDYSKNAVVLHFQKHGRKPRYKYDPELEAKRRSVQDNFMHFGKRQAEQLPPEGSYAGSDELEGMAKRAAMDRYGRDPKQDFMRFGRDPKQDFMRFGRDPKQDFMRFGRDPKQDFMRFGRDPKQDFMRFGRTPAEDFMRFGRTPAEDFMRFGRSDNFMRFGRSPHEELRSPKQDFMRFGRPDNFMRFGRSAPQDFVRSGKMDSNFIRFGKSLKPAAPESKPVKSNQGNPGERSPVDKAMTELFKKQELQDQQVKNGAQATTTQDGSVEQDQFFGQ.

Residues 1-22 (MGIALMFLLALYQMQSAIHSEI) form the signal peptide. The propeptide occupies 23-102 (IDTPNYAGNS…RYKYDPELEA (80 aa)). Phenylalanine amide is present on phenylalanine 114. Position 146 is a tyrosine amide (tyrosine 146). Phenylalanine amide occurs at positions 157, 168, 179, 190, 201, 212, 223, and 232. Residues 235–240 (SPHEEL) constitute a propeptide that is removed on maturation. Phenylalanine amide is present on residues phenylalanine 250 and phenylalanine 259. Position 270 is a serine amide (serine 270). Phenylalanine 280 is modified (phenylalanine amide). A propeptide spanning residues 283 to 347 (SLKPAAPESK…SVEQDQFFGQ (65 aa)) is cleaved from the precursor. The interval 283–347 (SLKPAAPESK…SVEQDQFFGQ (65 aa)) is disordered. Basic and acidic residues predominate over residues 305 to 320 (SPVDKAMTELFKKQEL). Residues 321–347 (QDQQVKNGAQATTTQDGSVEQDQFFGQ) are compositionally biased toward polar residues.

It belongs to the FARP (FMRFamide related peptide) family. This precursor includes 13 peptides that have FMRF or related sequences at their C-termini, and other putative neuropeptides.

Its subcellular location is the secreted. Its function is as follows. In insects, FMRFamide and related peptides have modulatory actions at skeletal neuromuscular junctions, and peptides that are immunologically related to FMRFamide are released into the circulation from neurohemal organs. This Drosophila melanogaster (Fruit fly) protein is FMRFamide-related peptides.